A 141-amino-acid polypeptide reads, in one-letter code: Hemoglobin subunit alpha (141 aa).

A Globin domain is found at 1–141 (VLSPADKTNI…VSTVLTSKYR (141 aa)). Position 3 is a phosphoserine (S3). K7 carries the N6-succinyllysine modification. T8 carries the post-translational modification Phosphothreonine. The residue at position 11 (K11) is an N6-succinyllysine. At K16 the chain carries N6-acetyllysine; alternate. K16 carries the N6-succinyllysine; alternate modification. A Phosphotyrosine modification is found at Y24. S35 bears the Phosphoserine mark. An N6-succinyllysine modification is found at K40. Phosphoserine is present on S49. H58 is a binding site for O2. A heme b-binding site is contributed by H87. The residue at position 102 (S102) is a Phosphoserine. A Phosphothreonine modification is found at T108. Residue S124 is modified to Phosphoserine. A phosphothreonine mark is found at T134 and T137. Phosphoserine is present on S138.

It belongs to the globin family. As to quaternary structure, heterotetramer of two alpha chains and two beta chains. In terms of tissue distribution, red blood cells.

In terms of biological role, involved in oxygen transport from the lung to the various peripheral tissues. Functionally, hemopressin acts as an antagonist peptide of the cannabinoid receptor CNR1. Hemopressin-binding efficiently blocks cannabinoid receptor CNR1 and subsequent signaling. The chain is Hemoglobin subunit alpha (HBA) from Chrysocyon brachyurus (Maned wolf).